Reading from the N-terminus, the 384-residue chain is N-acetylneuraminate epimerase (384 aa).

The signal sequence occupies residues 1–29 (MGMQMKNFKKMMTLMALCLSVAITTSGYA). 7 Kelch repeats span residues 51–95 (VIYV…VFLN), 97–149 (KLYV…VKLN), 151–184 (TMVL…KVIY), 185–230 (NYFN…VMEN), 233–282 (LMLI…LAGA), 304–353 (QNYT…SYGD), and 355–384 (VFLI…LLIK). Glu239 (proton acceptor) is an active-site residue.

This sequence belongs to the NanM family. In terms of assembly, homodimer.

The protein resides in the periplasm. The enzyme catalyses N-acetyl-alpha-neuraminate = N-acetyl-beta-neuraminate. In terms of biological role, converts alpha-N-acetylneuranimic acid (Neu5Ac) to the beta-anomer, accelerating the equilibrium between the alpha- and beta-anomers. Probably facilitates sialidase-negative bacteria to compete successfully for limited amounts of extracellular Neu5Ac, which is likely taken up in the beta-anomer. In addition, the rapid removal of sialic acid from solution might be advantageous to the bacterium to damp down host responses. This is N-acetylneuraminate epimerase from Salmonella typhi.